Consider the following 204-residue polypeptide: Endothelin-3 (204 aa).

An N-terminal signal peptide occupies residues 1-17; that stretch reads MELRLWFLFGLTVTSAA. Positions 18-71 are disordered; that stretch reads GPVPRPQPGDAGRSGVPRAPSATKETMAMVATRGPSPRSSGQEQEPGPFGELAA. Residues 18 to 80 constitute a propeptide that is removed on maturation; that stretch reads GPVPRPQPGD…AKGGPVRYRA (63 aa). 2 cysteine pairs are disulfide-bonded: Cys-83–Cys-97 and Cys-85–Cys-93. Positions 104–204 are excised as a propeptide; sequence INTPERTVPY…KSRTDKARRL (101 aa). A disordered region spans residues 115-140; sequence LSNHRGSVRGRRSAGPSPQSSQPSRG. Positions 127–140 are enriched in low complexity; it reads SAGPSPQSSQPSRG. The segment at 144-158 is endothelin-like; it reads CACAESQDRACVYFC. Residues 166–204 are disordered; sequence GASRTPETPDKEAGKPAGRATGGLHPRRLKSRTDKARRL.

This sequence belongs to the endothelin/sarafotoxin family.

Its subcellular location is the secreted. In terms of biological role, endothelins are endothelium-derived vasoconstrictor peptides. This is Endothelin-3 (EDN3) from Sus scrofa (Pig).